The chain runs to 715 residues: MLKKVFETTNLKDSFQVEIGTYARNVDASILVRYQDTVVLTTTVFSRKPNNLDFLPLTVIYQEKLYAAGKIPGSFLRREGRSNDHEILTSRLIDRSLRPLFPDYFQQEVQVINTVLSLDPDFKSELASMLGSSLSLLISEIPFFEAISGVYVGKINDKFIINPTLQQLANSTLHLMVAGTKHNVTMIEAHANEVSEQDFLEAINFAHQYIKKLCLFQENIKQQFAPAKITNTLHQTEQTQQQAFFAKHQSQVKQAILSCNSKNDLQQLKEQILDQAKQTPFFKTIDTATVFDYEAHKKHLQTTETLFQKLSKQETRSLILQEKIRPDKRGLEEIRTLESQIDLLPRAHGSALFTRGQTQSLAAVTLGCLSESKIIDGLSDEQNKRFMLHYNFPPFSVGAVGRYTAPSRREIGHGTLAEKAISQVLPEEKDFPYTIRVVSEILESNGSSSQATVCASSLALMASGVPLKKAVAGMSVGLVFDQATNKYVILSDIQGLEDHVGDMDLKIAGTNKGITALQMDLKIQGIHFKILQEAFLQAKKGRLHILEHMSQTISQPRLEVSKYAPKVCMMQIKPEKIRDIIGSGGKIINQIIESHDGVKIDIEQDGRVFVMHSNLETVKKTVAFIESLIQEIQIGTCYQASILRFLSDKQGKMIGAVAQVCPGIEGLIHVNQKKFQKITDVLKIGETVSVKCTKINDRGRIDFLLLPKNTQEKNS.

2 residues coordinate Mg(2+): D498 and D504. The region spanning 565-625 (PKVCMMQIKP…ETVKKTVAFI (61 aa)) is the KH domain. The S1 motif domain occupies 635 to 706 (GTCYQASILR…DRGRIDFLLL (72 aa)).

This sequence belongs to the polyribonucleotide nucleotidyltransferase family. The cofactor is Mg(2+).

The protein localises to the cytoplasm. The enzyme catalyses RNA(n+1) + phosphate = RNA(n) + a ribonucleoside 5'-diphosphate. Functionally, involved in mRNA degradation. Catalyzes the phosphorolysis of single-stranded polyribonucleotides processively in the 3'- to 5'-direction. The sequence is that of Polyribonucleotide nucleotidyltransferase from Onion yellows phytoplasma (strain OY-M).